Reading from the N-terminus, the 360-residue chain is Peptide chain release factor 1 (360 aa).

Q235 carries the post-translational modification N5-methylglutamine. The disordered stretch occupies residues 284 to 312; sequence ERQAQAQADTRRNLLGSGDRSDKIRTYNY.

This sequence belongs to the prokaryotic/mitochondrial release factor family. Post-translationally, methylated by PrmC. Methylation increases the termination efficiency of RF1.

It localises to the cytoplasm. In terms of biological role, peptide chain release factor 1 directs the termination of translation in response to the peptide chain termination codons UAG and UAA. This Histophilus somni (strain 129Pt) (Haemophilus somnus) protein is Peptide chain release factor 1.